The sequence spans 109 residues: Nucleoid-associated protein Shal_1591 (109 aa).

The disordered stretch occupies residues 87 to 109; sequence NQKEKMAEVTGGMQLPPGMKMPF.

This sequence belongs to the YbaB/EbfC family. As to quaternary structure, homodimer.

The protein localises to the cytoplasm. Its subcellular location is the nucleoid. Its function is as follows. Binds to DNA and alters its conformation. May be involved in regulation of gene expression, nucleoid organization and DNA protection. In Shewanella halifaxensis (strain HAW-EB4), this protein is Nucleoid-associated protein Shal_1591.